The primary structure comprises 392 residues: Dihydroorotate dehydrogenase (quinone) (392 aa).

Residues A90–K94 and T114 each bind FMN. A substrate-binding site is contributed by K94. N139–F143 contacts substrate. Residues N173 and N206 each contribute to the FMN site. A substrate-binding site is contributed by N206. S209 acts as the Nucleophile in catalysis. N211 provides a ligand contact to substrate. Residues K243 and V271 each contribute to the FMN site. N272–T273 is a binding site for substrate. FMN contacts are provided by residues G301, G330, and Y351 to T352.

Belongs to the dihydroorotate dehydrogenase family. Type 2 subfamily. As to quaternary structure, monomer. It depends on FMN as a cofactor.

It is found in the cell membrane. The enzyme catalyses (S)-dihydroorotate + a quinone = orotate + a quinol. It participates in pyrimidine metabolism; UMP biosynthesis via de novo pathway; orotate from (S)-dihydroorotate (quinone route): step 1/1. Its function is as follows. Catalyzes the conversion of dihydroorotate to orotate with quinone as electron acceptor. This Prochlorococcus marinus (strain MIT 9313) protein is Dihydroorotate dehydrogenase (quinone).